The chain runs to 100 residues: Large ribosomal subunit protein bL21 (100 aa).

The protein belongs to the bacterial ribosomal protein bL21 family. As to quaternary structure, part of the 50S ribosomal subunit. Contacts protein L20.

This protein binds to 23S rRNA in the presence of protein L20. This is Large ribosomal subunit protein bL21 from Rhodospirillum rubrum (strain ATCC 11170 / ATH 1.1.1 / DSM 467 / LMG 4362 / NCIMB 8255 / S1).